We begin with the raw amino-acid sequence, 306 residues long: uncharacterized protein (306 aa).

The next 8 membrane-spanning stretches (helical) occupy residues 7–27, 30–50, 68–88, 95–115, 144–164, 194–214, 232–252, and 274–294; these read LESWFFIAPALLLAVLSGYLA, VGIINIAINGGMVFGGLFMAL, LFITIPLSVLFSSVIGCLFAL, ADHVIVGTGINLLASGITLFI, AIGVFVFSLLLIGFVWYLMSF, IGAICSMMVAGLSGSLFVLSV, IAIMIISMWRIIPSIFIGLIF, and TIPFIISLLVMLLFGFLNVAP.

The protein resides in the cell membrane. This is an uncharacterized protein from Mycoplasma genitalium (strain ATCC 33530 / DSM 19775 / NCTC 10195 / G37) (Mycoplasmoides genitalium).